A 276-amino-acid chain; its full sequence is NH(3)-dependent NAD(+) synthetase (276 aa).

ATP is bound at residue 43-50 (GISGGVDS). Asp-49 serves as a coordination point for Mg(2+). Arg-146 provides a ligand contact to deamido-NAD(+). An ATP-binding site is contributed by Thr-166. Glu-171 provides a ligand contact to Mg(2+). Deamido-NAD(+)-binding residues include Lys-179 and Asp-186. ATP is bound by residues Lys-195 and Thr-217. 266–267 (HK) is a deamido-NAD(+) binding site.

Belongs to the NAD synthetase family. In terms of assembly, homodimer.

It carries out the reaction deamido-NAD(+) + NH4(+) + ATP = AMP + diphosphate + NAD(+) + H(+). It participates in cofactor biosynthesis; NAD(+) biosynthesis; NAD(+) from deamido-NAD(+) (ammonia route): step 1/1. Its function is as follows. Catalyzes the ATP-dependent amidation of deamido-NAD to form NAD. Uses ammonia as a nitrogen source. The protein is NH(3)-dependent NAD(+) synthetase of Shewanella putrefaciens (strain CN-32 / ATCC BAA-453).